Reading from the N-terminus, the 170-residue chain is MLGSSSGCESGWTLYLDQSVSSPSPSCFRDSNGFDSRRRSKDSWDQNYVHQEEEEEEDDLSMISDASSGPRNISEEDSVKKINIVGLKKQCKREKKRRDYEKMNSLLDDTASSPLFNFPHMLQKSVGGNKIEQTFPESTLDYSQGFSATQFQDKTAFQEQCGYLHMETRF.

The SOFL-A motif lies at 10-15 (SGWTLY). The segment at 17–78 (DQSVSSPSPS…GPRNISEEDS (62 aa)) is disordered. The span at 35-44 (DSRRRSKDSW) shows a compositional bias: basic and acidic residues. Positions 61–70 (SMISDASSGP) match the SOFL-B motif. Positions 79–86 (VKKINIVG) match the Nuclear localization signal motif.

The protein belongs to the SOFL plant protein family. In terms of tissue distribution, expressed in seedlings, roots, flowers and siliques. Barely detectable in leaves.

It localises to the cytoplasm. Its subcellular location is the nucleus. Its function is as follows. Involved in cytokinin-mediated development. The polypeptide is Protein SOB FIVE-LIKE 5 (Arabidopsis thaliana (Mouse-ear cress)).